The chain runs to 102 residues: Small ribosomal subunit protein uS10 (102 aa).

This sequence belongs to the universal ribosomal protein uS10 family. Part of the 30S ribosomal subunit.

Its function is as follows. Involved in the binding of tRNA to the ribosomes. This chain is Small ribosomal subunit protein uS10, found in Gluconobacter oxydans (strain 621H) (Gluconobacter suboxydans).